The following is a 176-amino-acid chain: Translation initiation factor IF-3 (176 aa).

This sequence belongs to the IF-3 family. Monomer.

The protein localises to the cytoplasm. Functionally, IF-3 binds to the 30S ribosomal subunit and shifts the equilibrium between 70S ribosomes and their 50S and 30S subunits in favor of the free subunits, thus enhancing the availability of 30S subunits on which protein synthesis initiation begins. This Rippkaea orientalis (strain PCC 8801 / RF-1) (Cyanothece sp. (strain PCC 8801)) protein is Translation initiation factor IF-3.